Reading from the N-terminus, the 354-residue chain is Probable butyrate kinase 2 (354 aa).

It belongs to the acetokinase family.

The protein resides in the cytoplasm. It carries out the reaction butanoate + ATP = butanoyl phosphate + ADP. The sequence is that of Probable butyrate kinase 2 from Caldanaerobacter subterraneus subsp. tengcongensis (strain DSM 15242 / JCM 11007 / NBRC 100824 / MB4) (Thermoanaerobacter tengcongensis).